The primary structure comprises 207 residues: Ribosomal RNA large subunit methyltransferase E (207 aa).

Positions 1–20 (MKRDPTKGRKTPDHYARKAK) are disordered. Glycine 56, tryptophan 58, aspartate 76, aspartate 94, and aspartate 116 together coordinate S-adenosyl-L-methionine. Lysine 156 (proton acceptor) is an active-site residue.

It belongs to the class I-like SAM-binding methyltransferase superfamily. RNA methyltransferase RlmE family.

It localises to the cytoplasm. It carries out the reaction uridine(2552) in 23S rRNA + S-adenosyl-L-methionine = 2'-O-methyluridine(2552) in 23S rRNA + S-adenosyl-L-homocysteine + H(+). Its function is as follows. Specifically methylates the uridine in position 2552 of 23S rRNA at the 2'-O position of the ribose in the fully assembled 50S ribosomal subunit. This chain is Ribosomal RNA large subunit methyltransferase E, found in Desulfosudis oleivorans (strain DSM 6200 / JCM 39069 / Hxd3) (Desulfococcus oleovorans).